We begin with the raw amino-acid sequence, 101 residues long: Small ribosomal subunit protein uS14 (101 aa).

The interval Met-1 to Ala-21 is disordered.

It belongs to the universal ribosomal protein uS14 family. Part of the 30S ribosomal subunit. Contacts proteins S3 and S10.

Binds 16S rRNA, required for the assembly of 30S particles and may also be responsible for determining the conformation of the 16S rRNA at the A site. This chain is Small ribosomal subunit protein uS14, found in Agrobacterium fabrum (strain C58 / ATCC 33970) (Agrobacterium tumefaciens (strain C58)).